We begin with the raw amino-acid sequence, 269 residues long: Chromophore lyase CRL, chloroplastic (269 aa).

Residues 19-36 (ARGLVVKTLVLIGGALLI) form a helical membrane-spanning segment.

Belongs to the CpcT/CpeT biliprotein lyase family. Mostly expressed in shoot apices, to a lower extent, in leaves, inflorescence stems, buds and cotyledons, and, at low levels, in roots and siliques.

The protein resides in the plastid. The protein localises to the chloroplast outer membrane. Functionally, covalently attaches a chromophore to Cys residue(s) of phycobiliproteins. Required for plastid division, and involved in cell differentiation and regulation of the cell division plane. Maintenance of plastid homeostasis controls plant preconditioning to stress and stress acclimation. Confers sensitivity to cabbage leaf curl virus (CaLCuV), probably by supporting viral movement. This chain is Chromophore lyase CRL, chloroplastic (CRL), found in Arabidopsis thaliana (Mouse-ear cress).